Reading from the N-terminus, the 180-residue chain is Chromosome-anchoring protein RacA (180 aa).

The H-T-H motif DNA-binding region spans 5 to 25 (TPFIAKKLGVSPKAVVRIAQQ). Residues 89–151 (SHDFEQLTAQ…LEATLKKEEP (63 aa)) are a coiled coil.

It belongs to the RacA family.

It localises to the cytoplasm. Required for the formation of axial filaments and for anchoring the origin regions at the cell poles in sporulating cells, thus ensuring proper chromosome segregation in the prespore. Binds in a dispersed manner throughout the chromosome but preferentially to sites clustered in the origin portion of the chromosome, causing condensation of the chromosome and its remodeling into an elongated, anchored structure. The chain is Chromosome-anchoring protein RacA from Bacillus cereus (strain ATCC 10987 / NRS 248).